A 108-amino-acid polypeptide reads, in one-letter code: MSETFTEISPHQAWELIENEGATLADIRDGHRYAYSHPQDAFHLTNESYGRFLDEVDYEEPVIVMCYHGVSSRNTAQFLVEQGFDRVYSVKGGFDGWERSGLPIETAY.

Positions 18 to 106 (ENEGATLADI…WERSGLPIET (89 aa)) constitute a Rhodanese domain. Catalysis depends on Cys66, which acts as the Cysteine persulfide intermediate.

It belongs to the GlpE family.

The protein resides in the cytoplasm. The catalysed reaction is thiosulfate + hydrogen cyanide = thiocyanate + sulfite + 2 H(+). It catalyses the reaction thiosulfate + [thioredoxin]-dithiol = [thioredoxin]-disulfide + hydrogen sulfide + sulfite + 2 H(+). Functionally, transferase that catalyzes the transfer of sulfur from thiosulfate to thiophilic acceptors such as cyanide or dithiols. May function in a CysM-independent thiosulfate assimilation pathway by catalyzing the conversion of thiosulfate to sulfite, which can then be used for L-cysteine biosynthesis. This Actinobacillus pleuropneumoniae serotype 7 (strain AP76) protein is Thiosulfate sulfurtransferase GlpE.